A 215-amino-acid polypeptide reads, in one-letter code: Probable transaldolase (215 aa).

The Schiff-base intermediate with substrate role is filled by Lys-83.

This sequence belongs to the transaldolase family. Type 3B subfamily.

The protein resides in the cytoplasm. It catalyses the reaction D-sedoheptulose 7-phosphate + D-glyceraldehyde 3-phosphate = D-erythrose 4-phosphate + beta-D-fructose 6-phosphate. It functions in the pathway carbohydrate degradation; pentose phosphate pathway; D-glyceraldehyde 3-phosphate and beta-D-fructose 6-phosphate from D-ribose 5-phosphate and D-xylulose 5-phosphate (non-oxidative stage): step 2/3. Functionally, transaldolase is important for the balance of metabolites in the pentose-phosphate pathway. In Heliobacterium modesticaldum (strain ATCC 51547 / Ice1), this protein is Probable transaldolase.